A 301-amino-acid chain; its full sequence is Vomeronasal type-1 receptor 4 (301 aa).

Topologically, residues 1–15 are extracellular; sequence MASRYVAVGMMLSQT. A helical membrane pass occupies residues 16–36; that stretch reads VVGVLGSFSLLLHYLSLHYIG. Residues 37 to 48 are Cytoplasmic-facing; sequence CRLRSADLIVKH. The helical transmembrane segment at 49 to 69 threads the bilayer; the sequence is LIAASFLTLLCKGVPQTMAAF. At 70-88 the chain is on the extracellular side; sequence RVRYFLNAIGCKLVFYLHR. Residues 89-107 form a helical membrane-spanning segment; sequence VGRGVSTGTTCLLSVFQVI. The Cytoplasmic segment spans residues 108–126; sequence TVSSRKSRWAKLKEKAPKH. Residues 127 to 147 traverse the membrane as a helical segment; that stretch reads VGFSVLLCWILCMLVNIIFPI. The Extracellular segment spans residues 148 to 185; that stretch reads YVTGKRNHTNITVNKDLGDCCGRGNNKIAQTLRAMLLS. Asn154 and Asn157 each carry an N-linked (GlcNAc...) asparagine glycan. The chain crosses the membrane as a helical span at residues 186-206; sequence FPDVLCLGFMLWASSSMVCIL. At 207–234 the chain is on the cytoplasmic side; it reads HRHKQRVQHIHRSNLSPRASPENRATQS. Residues 235–255 traverse the membrane as a helical segment; the sequence is ILIPVSTFVSSYTLSCLLQVC. Topologically, residues 256-264 are extracellular; the sequence is MALLDNPNS. Residues 265 to 285 form a helical membrane-spanning segment; the sequence is LLVNTSALMSACFPTLSPFVL. Topologically, residues 286–301 are cytoplasmic; that stretch reads MSCDPSVYRLCFAWKR.

This sequence belongs to the G-protein coupled receptor 1 family.

It is found in the cell membrane. Putative pheromone receptor. The chain is Vomeronasal type-1 receptor 4 (VN1R4) from Pongo pygmaeus (Bornean orangutan).